We begin with the raw amino-acid sequence, 93 residues long: YcgL domain-containing protein VFMJ11_1829 (93 aa).

Residues 1–84 (MFCSIYKSTK…PPENLLEKYK (84 aa)) enclose the YcgL domain.

The sequence is that of YcgL domain-containing protein VFMJ11_1829 from Aliivibrio fischeri (strain MJ11) (Vibrio fischeri).